The chain runs to 403 residues: MASSMLSATTVPLQQGGGLSEFSGLRSSASLPMRRNATSDDFMSAVSFRTHAVGTSGGPRRAPTEAKLKVAINGFGRIGRNFLRCWHGRGDASPLDVIAINDTGGVKQASHLLKYDSTLGIFDADVKPVGDNAISVDGKVIKVVSDRNPSNLPWGELGIDLVIEGTGVFVDREGAGKHIQAGAKKVLITAPGKGDIPTYVVGVNADQYNPDEPIISNASCTTNCLAPFVKVLDQKFGIIKGTMTTTHSYTGDQRLLDASHRDLRRARAAALNIVPTSTGAAKAVSLVLPNLKGKLNGIALRVPTPNVSVVDLVVQVSKKTLAEEVNQAFRDAAANELTGILEVCDVPLVSVDFRCSDVSSTIDASLTMVMGDDMVKVISWYDNEWGYSQRVVDLADICANQWK.

The transit peptide at 1-66 (MASSMLSATT…GGPRRAPTEA (66 aa)) directs the protein to the chloroplast. NADP(+)-binding positions include 77–78 (RI), Asp102, and Arg147. D-glyceraldehyde 3-phosphate is bound by residues 219-221 (SCT), Thr250, Arg265, 278-279 (TG), and Arg301. Cys220 acts as the Nucleophile in catalysis. Position 383 (Asn383) interacts with NADP(+).

Belongs to the glyceraldehyde-3-phosphate dehydrogenase family. In terms of assembly, tetramer of either four A chains (GAPDH 2) or two A and two B chains (GAPDH 1).

It localises to the plastid. It is found in the chloroplast. It carries out the reaction D-glyceraldehyde 3-phosphate + phosphate + NADP(+) = (2R)-3-phospho-glyceroyl phosphate + NADPH + H(+). It participates in carbohydrate biosynthesis; Calvin cycle. The polypeptide is Glyceraldehyde-3-phosphate dehydrogenase A, chloroplastic (GAPA) (Zea mays (Maize)).